A 279-amino-acid chain; its full sequence is Polyamine aminopropyltransferase (279 aa).

A PABS domain is found at I4 to K237. Q29 serves as a coordination point for S-methyl-5'-thioadenosine. Positions 60 and 84 each coordinate spermidine. S-methyl-5'-thioadenosine is bound by residues E104 and D141–G142. The Proton acceptor role is filled by D158. Spermidine is bound at residue D158–D161. P165 is an S-methyl-5'-thioadenosine binding site.

This sequence belongs to the spermidine/spermine synthase family. Homodimer or homotetramer.

The protein localises to the cytoplasm. The enzyme catalyses S-adenosyl 3-(methylsulfanyl)propylamine + putrescine = S-methyl-5'-thioadenosine + spermidine + H(+). The protein operates within amine and polyamine biosynthesis; spermidine biosynthesis; spermidine from putrescine: step 1/1. Its function is as follows. Catalyzes the irreversible transfer of a propylamine group from the amino donor S-adenosylmethioninamine (decarboxy-AdoMet) to putrescine (1,4-diaminobutane) to yield spermidine. The polypeptide is Polyamine aminopropyltransferase (Pyrococcus abyssi (strain GE5 / Orsay)).